We begin with the raw amino-acid sequence, 255 residues long: Pimeloyl-[acyl-carrier protein] methyl ester esterase (255 aa).

One can recognise an AB hydrolase-1 domain in the interval 16–241; sequence LVLVHGWGMN…QSSHAPFMTE (226 aa). Substrate contacts are provided by residues W22, 82-83, and 143-147; these read SL and FMALQ. The active-site Nucleophile is S82. Catalysis depends on residues D207 and H235. A substrate-binding site is contributed by H235.

The protein belongs to the AB hydrolase superfamily. Carboxylesterase BioH family. Monomer.

It localises to the cytoplasm. It carries out the reaction 6-carboxyhexanoyl-[ACP] methyl ester + H2O = 6-carboxyhexanoyl-[ACP] + methanol + H(+). It participates in cofactor biosynthesis; biotin biosynthesis. The physiological role of BioH is to remove the methyl group introduced by BioC when the pimeloyl moiety is complete. It allows to synthesize pimeloyl-ACP via the fatty acid synthetic pathway through the hydrolysis of the ester bonds of pimeloyl-ACP esters. The chain is Pimeloyl-[acyl-carrier protein] methyl ester esterase from Vibrio cholerae serotype O1 (strain ATCC 39315 / El Tor Inaba N16961).